Reading from the N-terminus, the 198-residue chain is Altered inheritance of mitochondria protein 34, mitochondrial (198 aa).

A mitochondrion-targeting transit peptide spans 1–55 (MSISLLGRIVSQQFSGIRAAEPGRSLYLPFTLLLKQPGAYKVSLHRYVHSTQTKS). Residues 69–103 (FQKFTVKVLKEQCKSRGLKLSGRKSDLLQRLITHD) enclose the SAP domain. A helical membrane pass occupies residues 172-187 (IFLLGFFMLSCLWWNL).

Belongs to the AIM34 family.

It is found in the mitochondrion membrane. The protein is Altered inheritance of mitochondria protein 34, mitochondrial (AIM34) of Saccharomyces cerevisiae (strain YJM789) (Baker's yeast).